The chain runs to 74 residues: UPF0291 protein lmo0496 (74 aa).

The protein belongs to the UPF0291 family.

Its subcellular location is the cytoplasm. The chain is UPF0291 protein lmo0496 from Listeria monocytogenes serovar 1/2a (strain ATCC BAA-679 / EGD-e).